Here is a 644-residue protein sequence, read N- to C-terminus: Macrolide export ATP-binding/permease protein MacB (644 aa).

The Cytoplasmic segment spans residues 1–268 (MNIIEIKQLN…SAIVAHKMRS (268 aa)). The ABC transporter domain occupies 4–242 (IEIKQLNRYF…VKNPSVFKGR (239 aa)). 40–47 (GQSGSGKS) is an ATP binding site. Residues 269–289 (LLTMLGIIIGITSVVSVVALG) form a helical membrane-spanning segment. Over 290–523 (NGSQQKILEN…TGTMKLLISS (234 aa)) the chain is Periplasmic. The helical transmembrane segment at 524 to 544 (IAFISLIVGGIGVMNIMLVSV) threads the bilayer. The Cytoplasmic portion of the chain corresponds to 545 to 573 (TERTKEIGVRMAIGARQINILQQFLIEAV). A helical transmembrane segment spans residues 574–594 (LICLIGGVAGILLSVLIGVLF). Residues 595–607 (NSFITDFSMDFST) are Periplasmic-facing. Residues 608–628 (ASIVTAVLFSTLIGVLFGYMP) form a helical membrane-spanning segment. The Cytoplasmic segment spans residues 629-644 (AKKAAELNPITALAQE).

Belongs to the ABC transporter superfamily. Macrolide exporter (TC 3.A.1.122) family. Homodimer. Part of the tripartite efflux system MacAB-TdeA, which is composed of an inner membrane transporter, MacB, a periplasmic membrane fusion protein, MacA, and an outer membrane component, TdeA. The complex forms a large protein conduit and can translocate molecules across both the inner and outer membranes. Interacts with MacA.

The protein localises to the cell inner membrane. Its function is as follows. Part of the tripartite efflux system MacAB-TdeA. MacB is a non-canonical ABC transporter that contains transmembrane domains (TMD), which form a pore in the inner membrane, and an ATP-binding domain (NBD), which is responsible for energy generation. Confers resistance against macrolides. The chain is Macrolide export ATP-binding/permease protein MacB from Aggregatibacter actinomycetemcomitans (Actinobacillus actinomycetemcomitans).